The sequence spans 435 residues: MRVLILGSGVIGTTSAWYLSKAGCEVVVVDRQSGAGLETSYANGGQLSFGYTSPWAAPGVPLKAVRWLFERHAPLSIRPTTDWNQYVWLARMLRHCSAERYAVNKSRMLRLSEYSREALEALSAETGITFEGRRLGTIQLFRTQQQLDAAVRDIELLTQYGIPYEVLSPHQLAKFEPGLVDGSVRFAGALRLPHDQTGDCYLFTQRLAALAAKRGVEFRYGCKVQRLEVDGPRVTGAWINGALERADCCVVALGSYSPLLLAPLGLRLPVYPLKGFSLTLPMIDASRAPVSTVLDESYKVAVTRFDERIRVAGMAEVSGYDVSLNPRRRATLEMVVQDVYPGCGDLGRGEFWTGLRPATPDGTPVIGATPYQGLFLNTGHGTLGWTMSSGSGRYLADLICCRPCEISSEGLDMFRYLVSTIPCPQECAPCVPPTP.

Residue 3-17 coordinates FAD; it reads VLILGSGVIGTTSAW.

The protein belongs to the DadA oxidoreductase family. Requires FAD as cofactor.

It catalyses the reaction a D-alpha-amino acid + A + H2O = a 2-oxocarboxylate + AH2 + NH4(+). It participates in amino-acid degradation; D-alanine degradation; NH(3) and pyruvate from D-alanine: step 1/1. Oxidative deamination of D-amino acids. The protein is D-amino acid dehydrogenase of Xylella fastidiosa (strain M12).